A 181-amino-acid chain; its full sequence is Putative adenylate kinase (181 aa).

Residues Gly-10, Gly-12, Lys-13, Ser-14, and Thr-15 each coordinate ATP. Positions 35–58 (NITEVVSKNGLYLEKDIEMDSYVV) are NMP. Residues 106–116 (SRNYSSEKVKE) form an LID region. Residues Arg-107 and Lys-147 each coordinate ATP.

The protein belongs to the adenylate kinase family. AK6 subfamily. Interacts with uS11. Not a structural component of 40S pre-ribosomes, but transiently interacts with them by binding to uS11.

The catalysed reaction is AMP + ATP = 2 ADP. The enzyme catalyses ATP + H2O = ADP + phosphate + H(+). Broad-specificity nucleoside monophosphate (NMP) kinase that catalyzes the reversible transfer of the terminal phosphate group between nucleoside triphosphates and monophosphates. Also has ATPase activity. Involved in the late maturation steps of the 30S ribosomal particles, specifically 16S rRNA maturation. While NMP activity is not required for ribosome maturation, ATPase activity is. Associates transiently with small ribosomal subunit protein uS11. ATP hydrolysis breaks the interaction with uS11. May temporarily remove uS11 from the ribosome to enable a conformational change of the ribosomal RNA that is needed for the final maturation step of the small ribosomal subunit. This chain is Putative adenylate kinase, found in Methanococcus maripaludis (strain C7 / ATCC BAA-1331).